Here is a 112-residue protein sequence, read N- to C-terminus: Cuticle protein AM1239 (112 aa).

Residues 16 to 85 (DGNFNYRFET…FIPTDHPLPA (70 aa)) form the Chitin-binding type R&amp;R domain. O-linked (HexNAc) threonine glycosylation occurs at Thr-79.

As to expression, arthrodial membrane.

In Cancer pagurus (Rock crab), this protein is Cuticle protein AM1239.